Reading from the N-terminus, the 388-residue chain is UDP-N-acetylglucosamine--N-acetylmuramyl-(pentapeptide) pyrophosphoryl-undecaprenol N-acetylglucosamine transferase (388 aa).

UDP-N-acetyl-alpha-D-glucosamine contacts are provided by residues 15 to 17 (TGG), Asn125, Arg168, Ser196, and Gln297.

This sequence belongs to the glycosyltransferase 28 family. MurG subfamily.

The protein resides in the cell inner membrane. The enzyme catalyses di-trans,octa-cis-undecaprenyl diphospho-N-acetyl-alpha-D-muramoyl-L-alanyl-D-glutamyl-meso-2,6-diaminopimeloyl-D-alanyl-D-alanine + UDP-N-acetyl-alpha-D-glucosamine = di-trans,octa-cis-undecaprenyl diphospho-[N-acetyl-alpha-D-glucosaminyl-(1-&gt;4)]-N-acetyl-alpha-D-muramoyl-L-alanyl-D-glutamyl-meso-2,6-diaminopimeloyl-D-alanyl-D-alanine + UDP + H(+). It functions in the pathway cell wall biogenesis; peptidoglycan biosynthesis. Cell wall formation. Catalyzes the transfer of a GlcNAc subunit on undecaprenyl-pyrophosphoryl-MurNAc-pentapeptide (lipid intermediate I) to form undecaprenyl-pyrophosphoryl-MurNAc-(pentapeptide)GlcNAc (lipid intermediate II). The protein is UDP-N-acetylglucosamine--N-acetylmuramyl-(pentapeptide) pyrophosphoryl-undecaprenol N-acetylglucosamine transferase of Novosphingobium aromaticivorans (strain ATCC 700278 / DSM 12444 / CCUG 56034 / CIP 105152 / NBRC 16084 / F199).